The primary structure comprises 122 residues: MARVKRAVNAQKKRRTILESAKGYRGQRSRLYRKAKEQMLHSMTYSYRDRRARKGDFRKLWITRINAATRQNGMSYNRFVQGLKAAGVEVDRKILAELAVNDSQAFAALVDVARQNLPEGAA.

The protein belongs to the bacterial ribosomal protein bL20 family.

Binds directly to 23S ribosomal RNA and is necessary for the in vitro assembly process of the 50S ribosomal subunit. It is not involved in the protein synthesizing functions of that subunit. This chain is Large ribosomal subunit protein bL20, found in Saccharopolyspora erythraea (strain ATCC 11635 / DSM 40517 / JCM 4748 / NBRC 13426 / NCIMB 8594 / NRRL 2338).